We begin with the raw amino-acid sequence, 395 residues long: Flap endonuclease 1 (395 aa).

The segment at 1–108 (MGILGLSKLL…DELEMRRQKA (108 aa)) is N-domain. A Mg(2+)-binding site is contributed by Asp34. Arg74 serves as a coordination point for DNA. Residue Asp90 coordinates Mg(2+). The segment at 116-136 (EKAKDAGDDEMMEKMSKRTVR) is disordered. The I-domain stretch occupies residues 126–257 (MMEKMSKRTV…QKAWEGIQRY (132 aa)). Mg(2+) is bound by residues Glu162, Glu164, Asp183, and Asp185. Glu162 contacts DNA. Positions 235 and 237 each coordinate DNA. Asp237 lines the Mg(2+) pocket. The segment at 340-348 (TQGRLDSFF) is interaction with PCNA.

This sequence belongs to the XPG/RAD2 endonuclease family. FEN1 subfamily. As to quaternary structure, interacts with PCNA. Three molecules of FEN1 bind to one PCNA trimer with each molecule binding to one PCNA monomer. PCNA stimulates the nuclease activity without altering cleavage specificity. It depends on Mg(2+) as a cofactor. In terms of processing, phosphorylated. Phosphorylation upon DNA damage induces relocalization to the nuclear plasma.

It localises to the nucleus. The protein localises to the nucleolus. The protein resides in the nucleoplasm. Its subcellular location is the mitochondrion. Structure-specific nuclease with 5'-flap endonuclease and 5'-3' exonuclease activities involved in DNA replication and repair. During DNA replication, cleaves the 5'-overhanging flap structure that is generated by displacement synthesis when DNA polymerase encounters the 5'-end of a downstream Okazaki fragment. It enters the flap from the 5'-end and then tracks to cleave the flap base, leaving a nick for ligation. Also involved in the long patch base excision repair (LP-BER) pathway, by cleaving within the apurinic/apyrimidinic (AP) site-terminated flap. Acts as a genome stabilization factor that prevents flaps from equilibrating into structures that lead to duplications and deletions. Also possesses 5'-3' exonuclease activity on nicked or gapped double-stranded DNA, and exhibits RNase H activity. Also involved in replication and repair of rDNA and in repairing mitochondrial DNA. The sequence is that of Flap endonuclease 1 from Leishmania major.